The following is a 483-amino-acid chain: MNLNLILKSLEYSFIKENKKEIEKIEYDSRKVKEGDLFVCIEGYATDGHKYAKKAYDNGAKVIVCEKDLEDLSYYKDCTIIKVSDSRKALAIMSSNYYGNPSKHIKIIGITGTNGKTTSTFMMKAILEKAGYKVGLLGTIANYIGNKKIESHRTTPESLELQKLFKDMVDEKVDYCVMEVSSHSLYLDRVYGVEFKEAIFTNLTQDHLDFHKTFENYFNSKLILFKNAQNSVINIDDSYGEKVLKKALGNKITYGVEKNCDLKAENLHMHSRGVEFDTIFKNEKETIALNIPGKYNIYNALGSIGACLLEGIPLKTIKEALEDMPSVPGRCEIVTKNYNLGYDVIVDYAHTPDGLENILNTAREFTKGRLISVYGCGGDRDRTKRPIMGKVGSNLSDIAIITSDNPRTEDPKLIIKDVLEGIERDNYIVVEGRRDAIRKAMEIAKENDVIVVAGKGHEDYQILKDKTIHFDEREVIEELIKEI.

A UDP-N-acetyl-alpha-D-muramoyl-L-alanyl-D-glutamate-binding site is contributed by Ser29. 112 to 118 contributes to the ATP binding site; it reads GTNGKTT. Residues 154-155, Ser181, and Arg189 each bind UDP-N-acetyl-alpha-D-muramoyl-L-alanyl-D-glutamate; that span reads TT. Lys221 bears the N6-carboxylysine mark. Meso-2,6-diaminopimelate-binding positions include Arg380, 404–407, Gly454, and Glu458; that span reads DNPR. A Meso-diaminopimelate recognition motif motif is present at residues 404–407; sequence DNPR.

This sequence belongs to the MurCDEF family. MurE subfamily. Mg(2+) serves as cofactor. In terms of processing, carboxylation is probably crucial for Mg(2+) binding and, consequently, for the gamma-phosphate positioning of ATP.

It is found in the cytoplasm. It catalyses the reaction UDP-N-acetyl-alpha-D-muramoyl-L-alanyl-D-glutamate + meso-2,6-diaminopimelate + ATP = UDP-N-acetyl-alpha-D-muramoyl-L-alanyl-gamma-D-glutamyl-meso-2,6-diaminopimelate + ADP + phosphate + H(+). Its pathway is cell wall biogenesis; peptidoglycan biosynthesis. Its function is as follows. Catalyzes the addition of meso-diaminopimelic acid to the nucleotide precursor UDP-N-acetylmuramoyl-L-alanyl-D-glutamate (UMAG) in the biosynthesis of bacterial cell-wall peptidoglycan. This chain is UDP-N-acetylmuramoyl-L-alanyl-D-glutamate--2,6-diaminopimelate ligase, found in Clostridium botulinum (strain ATCC 19397 / Type A).